The chain runs to 156 residues: Ribosomal RNA large subunit methyltransferase H (156 aa).

Residues Leu-73, Gly-104, and 123–128 (LSSLTL) each bind S-adenosyl-L-methionine.

This sequence belongs to the RNA methyltransferase RlmH family. Homodimer.

The protein localises to the cytoplasm. It carries out the reaction pseudouridine(1915) in 23S rRNA + S-adenosyl-L-methionine = N(3)-methylpseudouridine(1915) in 23S rRNA + S-adenosyl-L-homocysteine + H(+). Specifically methylates the pseudouridine at position 1915 (m3Psi1915) in 23S rRNA. The polypeptide is Ribosomal RNA large subunit methyltransferase H (Neisseria meningitidis serogroup C (strain 053442)).